The following is a 281-amino-acid chain: sn-glycerol-3-phosphate transport system permease protein UgpE (281 aa).

6 helical membrane passes run 14–34, 82–104, 113–133, 142–162, 188–210, and 247–267; these read VMLI…FVAA, VMAF…AIVY, FFWL…FPTI, LDSY…TFLF, FWDI…TFIY, and WNQV…VVLL. Residues 77 to 268 enclose the ABC transmembrane type-1 domain; that stretch reads LFNSFVMAFA…IPPVAVVLLM (192 aa).

The protein belongs to the binding-protein-dependent transport system permease family. UgpAE subfamily. As to quaternary structure, the complex is composed of two ATP-binding proteins (UgpC), two transmembrane proteins (UgpA and UgpE) and a solute-binding protein (UgpB).

It localises to the cell inner membrane. Functionally, part of the ABC transporter complex UgpBAEC involved in sn-glycerol-3-phosphate (G3P) import. Probably responsible for the translocation of the substrate across the membrane. The polypeptide is sn-glycerol-3-phosphate transport system permease protein UgpE (ugpE) (Yersinia enterocolitica serotype O:8 / biotype 1B (strain NCTC 13174 / 8081)).